Here is a 57-residue protein sequence, read N- to C-terminus: Large ribosomal subunit protein bL32 (57 aa).

The protein belongs to the bacterial ribosomal protein bL32 family.

This Staphylococcus haemolyticus (strain JCSC1435) protein is Large ribosomal subunit protein bL32.